The sequence spans 705 residues: Elongation factor G (705 aa).

The 287-residue stretch at 8 to 294 (DRYRNFGIMA…AVIDYLPSPL (287 aa)) folds into the tr-type G domain. GTP contacts are provided by residues 17 to 24 (AHIDAGKT), 92 to 96 (DTPGH), and 146 to 149 (NKMD).

Belongs to the TRAFAC class translation factor GTPase superfamily. Classic translation factor GTPase family. EF-G/EF-2 subfamily.

It localises to the cytoplasm. Catalyzes the GTP-dependent ribosomal translocation step during translation elongation. During this step, the ribosome changes from the pre-translocational (PRE) to the post-translocational (POST) state as the newly formed A-site-bound peptidyl-tRNA and P-site-bound deacylated tRNA move to the P and E sites, respectively. Catalyzes the coordinated movement of the two tRNA molecules, the mRNA and conformational changes in the ribosome. The sequence is that of Elongation factor G from Dinoroseobacter shibae (strain DSM 16493 / NCIMB 14021 / DFL 12).